Here is a 551-residue protein sequence, read N- to C-terminus: Cleavage and polyadenylation specificity factor subunit 6 (551 aa).

Residues 1-213 (MADGVDHIDI…RGRFPGAVPG (213 aa)) form a necessary for interaction with NXF1 region. One can recognise an RRM domain in the interval 81–161 (IALYIGNLTW…QNPVVTPCNK (81 aa)). The necessary for interaction with NUDT21/CPSF5 stretch occupies residues 81 to 161 (IALYIGNLTW…QNPVVTPCNK (81 aa)). Residues 81-161 (IALYIGNLTW…QNPVVTPCNK (81 aa)) are necessary for nuclear paraspeckles localization. At T157 the chain carries Phosphothreonine. A compositionally biased stretch (polar residues) spans 169–180 (MQSRKTTQSGQM). Disordered regions lie at residues 169–411 (MQSR…PLSE) and 477–551 (LHGI…YRHR). The GAR motif lies at 202–206 (RGRGR). Low complexity predominate over residues 207 to 219 (FPGAVPGGDRFPG). Pro residues-rich tracts occupy residues 220–265 (PAGP…PLAG), 285–366 (GQPP…PPPT), and 377–388 (GPPPTDPYGRPP). A (Microbial infection) Binds to HIV-1 capsid protein p24 (CA) region spans residues 358–551 (NPAFFPPPTN…RDREREYRHR (194 aa)). A compositionally biased stretch (basic and acidic residues) spans 389–404 (PYDRGDYGPPGREMDT). 2 positions are modified to phosphothreonine: T404 and T407. The interval 404 to 551 (TARTPLSEAE…RDREREYRHR (148 aa)) is sufficient for nuclear speckle localization. The interval 405–551 (ARTPLSEAEF…RDREREYRHR (147 aa)) is necessary for RNA-binding. Residues 481-551 (ESKSYGSGSR…RDREREYRHR (71 aa)) form a necessary for interaction with SRSF3, SRSF7 and TRA2B/SFRS10 region. Positions 489-503 (SRRERSRERDHSRSR) are enriched in basic and acidic residues. Positions 490 to 551 (RRERSRERDH…RDREREYRHR (62 aa)) are arg/Ser-rich domain. Residues S494, S500, S511, S513, and S525 each carry the phosphoserine modification. A compositionally biased stretch (basic residues) spans 504–514 (EKSRRHKSRSR). Positions 510 to 551 (KSRSRDRHDDYYRERSRERERHRDRDRDRDRERDREREYRHR) are sufficient for nuclear targeting. Basic and acidic residues predominate over residues 515–551 (DRHDDYYRERSRERERHRDRDRDRDRERDREREYRHR).

This sequence belongs to the RRM CPSF6/7 family. In terms of assembly, component of the cleavage factor Im (CFIm) complex which is a heterotetramer composed of two subunits of NUDT21/CPSF5 and two subunits of CPSF6 or CPSF7 or a heterodimer of CPSF6 and CPSF7. The cleavage factor Im (CFIm) complex associates with the CPSF and CSTF complexes to promote the assembly of the core mRNA 3'-processing machinery. Associates with the exon junction complex (EJC). Associates with the 80S ribosome particle. Interacts (via the RRM domain) with NUDT21/CPSF5; this interaction is direct and enhances binding to RNA. Interacts (via Arg/Ser-rich domain) with FIP1L1 (preferentially via unphosphorylated form and Arg/Glu/Asp-rich domain); this interaction mediates, at least in part, the interaction between the CFIm and CPSF complexes and may be inhibited by CPSF6 hyper-phosphorylation. Interacts (via N-terminus) with NXF1; this interaction is direct. Interacts with SRSF3. Interacts with SRSF7. Interacts with SNRNP70. Interacts with TRA2B/SFRS10. Interacts with UPF1. Interacts with UPF3B. Interacts with VIRMA. Interacts (via Arg/Ser-rich domain) with TNPO3; promoting nuclear import of CPSF6 independently of its phosphorylation status. Interacts with YTHDC1. As to quaternary structure, (Microbial infection) Interacts (via C-terminus) with HIV-1 capsid protein p24 (CA). Phosphorylated. Phosphorylated in the Arg/Ser-rich domain by SRPK1, in vitro. In terms of processing, symmetrically dimethylated on arginine residues in the GAR motif by PRMT5 in a WDR77- and CLNS1A-dependent manner. Asymmetrically dimethylated on arginine residues in the GAR motif by PRMT1.

Its subcellular location is the nucleus. It is found in the nucleoplasm. The protein resides in the nucleus speckle. It localises to the cytoplasm. In terms of biological role, component of the cleavage factor Im (CFIm) complex that functions as an activator of the pre-mRNA 3'-end cleavage and polyadenylation processing required for the maturation of pre-mRNA into functional mRNAs. CFIm contributes to the recruitment of multiprotein complexes on specific sequences on the pre-mRNA 3'-end, so called cleavage and polyadenylation signals (pA signals). Most pre-mRNAs contain multiple pA signals, resulting in alternative cleavage and polyadenylation (APA) producing mRNAs with variable 3'-end formation. The CFIm complex acts as a key regulator of cleavage and polyadenylation site choice during APA through its binding to 5'-UGUA-3' elements localized in the 3'-untranslated region (UTR) for a huge number of pre-mRNAs. CPSF6 enhances NUDT21/CPSF5 binding to 5'-UGUA-3' elements localized upstream of pA signals and promotes RNA looping, and hence activates directly the mRNA 3'-processing machinery. Plays a role in mRNA export. Functionally, (Microbial infection) Binds HIV-1 capsid-nucleocapsid (HIV-1 CA-NC) complexes and might thereby promote the integration of the virus in the nucleus of dividing cells (in vitro). The polypeptide is Cleavage and polyadenylation specificity factor subunit 6 (Homo sapiens (Human)).